Here is a 106-residue protein sequence, read N- to C-terminus: Toxin-like structure LSTX-D7 (106 aa).

The N-terminal stretch at 1-20 is a signal peptide; that stretch reads MMKVLVVFALLVTLISYSSS. Positions 21–41 are excised as a propeptide; that stretch reads EGIDDLEADELLSLMANEQTR. 4 disulfides stabilise this stretch: cysteine 45-cysteine 60, cysteine 52-cysteine 69, cysteine 59-cysteine 85, and cysteine 71-cysteine 83.

Belongs to the neurotoxin 19 (CSTX) family. 02 (D7) subfamily. Expressed by the venom gland.

Its subcellular location is the secreted. The chain is Toxin-like structure LSTX-D7 from Lycosa singoriensis (Wolf spider).